We begin with the raw amino-acid sequence, 71 residues long: Translation initiation factor IF-1 (71 aa).

In terms of domain architecture, S1-like spans 1-71 (MKEKNIEMQG…SKGRIIFRSR (71 aa)).

The protein belongs to the IF-1 family. Component of the 30S ribosomal translation pre-initiation complex which assembles on the 30S ribosome in the order IF-2 and IF-3, IF-1 and N-formylmethionyl-tRNA(fMet); mRNA recruitment can occur at any time during PIC assembly.

It localises to the cytoplasm. In terms of biological role, one of the essential components for the initiation of protein synthesis. Stabilizes the binding of IF-2 and IF-3 on the 30S subunit to which N-formylmethionyl-tRNA(fMet) subsequently binds. Helps modulate mRNA selection, yielding the 30S pre-initiation complex (PIC). Upon addition of the 50S ribosomal subunit IF-1, IF-2 and IF-3 are released leaving the mature 70S translation initiation complex. This chain is Translation initiation factor IF-1, found in Buchnera aphidicola subsp. Cinara cedri (strain Cc).